Reading from the N-terminus, the 353-residue chain is Photosystem II protein D1 (353 aa).

T2 is subject to N-acetylthreonine. T2 carries the phosphothreonine modification. A run of 3 helical transmembrane segments spans residues 29–46 (YIGWFGVLMIPTLLTATS), 118–133 (HFLLGVACYMGREWEL), and 142–156 (WIAVAYSAPVAAATA). H118 contacts chlorophyll a. Y126 contacts pheophytin a. Residues D170 and E189 each coordinate [CaMn4O5] cluster. A helical transmembrane segment spans residues 197-218 (FHMLGVAGVFGGSLFSAMHGSL). H198 serves as a coordination point for chlorophyll a. A quinone contacts are provided by residues H215 and 264 to 265 (SF). H215 is a Fe cation binding site. H272 contributes to the Fe cation binding site. Residues 274–288 (FLAAWPVVGIWFTAL) form a helical membrane-spanning segment. The [CaMn4O5] cluster site is built by H332, E333, D342, and A344. A propeptide spanning residues 345 to 353 (AVEVPSTNG) is cleaved from the precursor.

This sequence belongs to the reaction center PufL/M/PsbA/D family. As to quaternary structure, PSII is composed of 1 copy each of membrane proteins PsbA, PsbB, PsbC, PsbD, PsbE, PsbF, PsbH, PsbI, PsbJ, PsbK, PsbL, PsbM, PsbT, PsbX, PsbY, PsbZ, Psb30/Ycf12, at least 3 peripheral proteins of the oxygen-evolving complex and a large number of cofactors. It forms dimeric complexes. The D1/D2 heterodimer binds P680, chlorophylls that are the primary electron donor of PSII, and subsequent electron acceptors. It shares a non-heme iron and each subunit binds pheophytin, quinone, additional chlorophylls, carotenoids and lipids. D1 provides most of the ligands for the Mn4-Ca-O5 cluster of the oxygen-evolving complex (OEC). There is also a Cl(-1) ion associated with D1 and D2, which is required for oxygen evolution. The PSII complex binds additional chlorophylls, carotenoids and specific lipids. serves as cofactor. In terms of processing, tyr-161 forms a radical intermediate that is referred to as redox-active TyrZ, YZ or Y-Z. C-terminally processed by CTPA; processing is essential to allow assembly of the oxygen-evolving complex and thus photosynthetic growth.

It is found in the plastid. It localises to the chloroplast thylakoid membrane. It carries out the reaction 2 a plastoquinone + 4 hnu + 2 H2O = 2 a plastoquinol + O2. Its function is as follows. Photosystem II (PSII) is a light-driven water:plastoquinone oxidoreductase that uses light energy to abstract electrons from H(2)O, generating O(2) and a proton gradient subsequently used for ATP formation. It consists of a core antenna complex that captures photons, and an electron transfer chain that converts photonic excitation into a charge separation. The D1/D2 (PsbA/PsbD) reaction center heterodimer binds P680, the primary electron donor of PSII as well as several subsequent electron acceptors. This is Photosystem II protein D1 from Calycanthus floridus var. glaucus (Eastern sweetshrub).